Here is a 92-residue protein sequence, read N- to C-terminus: NELL2-interacting cell ontogeny regulator 1 (92 aa).

Positions 1 to 30 (MALPSAWSVMRVVIPFISVLGLLGVRLVGA) are cleaved as a signal peptide.

It belongs to the NICOL family.

The protein localises to the secreted. The protein resides in the cytoplasm. Its subcellular location is the perinuclear region. In terms of biological role, mRNA-binding protein which interacts with a range of target mRNAs and may promote extracellular matrix production. May function as a component of lumicrine signaling and may play a crucial role in epididymal-mediated sperm maturation and male fertility. In Gallus gallus (Chicken), this protein is NELL2-interacting cell ontogeny regulator 1.